A 180-amino-acid chain; its full sequence is FMN reductase (NADH) RutF (180 aa).

The protein belongs to the non-flavoprotein flavin reductase family. RutF subfamily.

It carries out the reaction FMNH2 + NAD(+) = FMN + NADH + 2 H(+). In terms of biological role, catalyzes the reduction of FMN to FMNH2 which is used to reduce pyrimidine by RutA via the Rut pathway. This is FMN reductase (NADH) RutF from Bradyrhizobium diazoefficiens (strain JCM 10833 / BCRC 13528 / IAM 13628 / NBRC 14792 / USDA 110).